The chain runs to 61 residues: Small ribosomal subunit protein uS14 (61 aa).

The Zn(2+) site is built by cysteine 24, cysteine 27, cysteine 40, and cysteine 43.

This sequence belongs to the universal ribosomal protein uS14 family. Zinc-binding uS14 subfamily. Part of the 30S ribosomal subunit. Contacts proteins S3 and S10. It depends on Zn(2+) as a cofactor.

Functionally, binds 16S rRNA, required for the assembly of 30S particles and may also be responsible for determining the conformation of the 16S rRNA at the A site. This is Small ribosomal subunit protein uS14 from Leptospira borgpetersenii serovar Hardjo-bovis (strain JB197).